The chain runs to 565 residues: Periplasmic trehalase (565 aa).

An N-terminal signal peptide occupies residues 1–30 (MKSPAPSRPQKMALIPACIFLCFAALSVQA). Residues Arg152, 159 to 160 (WD), Asn196, 205 to 207 (RSQ), 277 to 279 (RPE), and Gly310 each bind substrate. Residues Asp312 and Glu496 each act as proton donor/acceptor in the active site. Glu511 is a substrate binding site. The tract at residues 539–565 (CDNVPATRPLSESTTQPVKQKEAEPTP) is disordered.

This sequence belongs to the glycosyl hydrolase 37 family. In terms of assembly, monomer.

It is found in the periplasm. The catalysed reaction is alpha,alpha-trehalose + H2O = alpha-D-glucose + beta-D-glucose. In terms of biological role, provides the cells with the ability to utilize trehalose at high osmolarity by splitting it into glucose molecules that can subsequently be taken up by the phosphotransferase-mediated uptake system. The chain is Periplasmic trehalase from Escherichia coli O6:H1 (strain CFT073 / ATCC 700928 / UPEC).